The sequence spans 395 residues: THAP domain-containing protein 5 (395 aa).

Residues Met1 to Phe84 form a THAP-type zinc finger. Residues Ser85 to Cys112 form a disordered region. Positions Asn90–Cys112 are enriched in basic and acidic residues. An HCFC1-binding motif (HBM) motif is present at residues Glu321–Tyr324. The stretch at Leu348 to Ile382 forms a coiled coil.

As to quaternary structure, interacts with HTRA2; under apoptotic conditions. Interacts with ABRAXAS2. Post-translationally, cleaved by HTRA2 during apoptosis. As to expression, detected in heart. Detected in brain and muscle (at protein level). Highly expressed in the heart. Also found in brain and skeletal muscle.

It is found in the nucleus. Has sequence-specific DNA-binding activity and can function as transcriptional repressor (in vitro). May be a regulator of cell cycle: THAP5 overexpression in human cell lines causes cell cycle arrest at G2/M phase. This is THAP domain-containing protein 5 (THAP5) from Homo sapiens (Human).